We begin with the raw amino-acid sequence, 411 residues long: Methylthioribose-1-phosphate isomerase (411 aa).

The active-site Proton donor is Asp284.

This sequence belongs to the eIF-2B alpha/beta/delta subunits family. MtnA subfamily.

It is found in the cytoplasm. The protein localises to the nucleus. It catalyses the reaction 5-(methylsulfanyl)-alpha-D-ribose 1-phosphate = 5-(methylsulfanyl)-D-ribulose 1-phosphate. The protein operates within amino-acid biosynthesis; L-methionine biosynthesis via salvage pathway; L-methionine from S-methyl-5-thio-alpha-D-ribose 1-phosphate: step 1/6. Functionally, catalyzes the interconversion of methylthioribose-1-phosphate (MTR-1-P) into methylthioribulose-1-phosphate (MTRu-1-P). This Komagataella phaffii (strain GS115 / ATCC 20864) (Yeast) protein is Methylthioribose-1-phosphate isomerase.